The sequence spans 224 residues: Non-structural protein V (224 aa).

Residues 55–65 (KNIQYPTTSHQ) show a composition bias toward polar residues. 2 disordered regions span residues 55-90 (KNIQ…GTGG) and 145-172 (TSTP…GHRR). Zn(2+)-binding residues include histidine 170, cysteine 189, cysteine 193, cysteine 205, cysteine 207, cysteine 210, cysteine 214, and cysteine 217.

This sequence belongs to the paramyxoviruses V protein family. As to quaternary structure, interacts with host IFIH1/MDA5 and DHX58/LGP2. Forms with host DDB1, CUL4A, STAT1, STAT2 and STAT3 the mumps virus V-dependent complex (VDC).

It localises to the virion. It is found in the host cytoplasm. In terms of biological role, plays an essential role in the inhibition of host immune response. Prevents the establishment of cellular antiviral state by blocking interferon-alpha/beta (IFN-alpha/beta) production and signaling pathway. Interacts with host IFIH1/MDA5 and DHX58/LGP2 to inhibit the transduction pathway involved in the activation of IFN-beta promoter, thus protecting the virus against cell antiviral state. Blocks the type I and II interferon signaling pathways by interacting with host STAT1, STAT2 and STAT3, and mediating their ubiquitination and subsequent proteasomal degradation. The sequence is that of Non-structural protein V from Mumps virus genotype B (strain Miyahara vaccine) (MuV).